Consider the following 525-residue polypeptide: Nucleolar and spindle-associated protein 1-C (525 aa).

Disordered stretches follow at residues 43–203, 250–293, 373–398, and 452–525; these read FYPE…KKLH, TPVS…FSAA, TPES…EKAK, and LSRP…VPVQ. The segment covering 58–69 has biased composition (polar residues); the sequence is SSLTDTDELNSS. Residues 82–92 show a composition bias toward basic residues; it reads THRRGRGRKPL. The span at 93–102 shows a compositional bias: basic and acidic residues; sequence KNHDTPKDEF. The span at 113 to 127 shows a compositional bias: polar residues; the sequence is SLASETDNTQHQNCL. Positions 160-169 are enriched in basic and acidic residues; it reads TTEKRQKKAS. Residues 270 to 285 show a composition bias toward polar residues; sequence PPTTGASPSRTPTNQR. Residues 476–494 are compositionally biased toward polar residues; the sequence is CGSNNNVSVLKNNFKQPHL. Residues 495–514 show a composition bias toward basic and acidic residues; it reads QTREDRRKQHEQDRKGKRDQ.

Belongs to the NUSAP family. As to quaternary structure, interacts with DNA, microtubules, ipo7, kpna2 and kpnb1. Microtubule stabilization is inhibited by ipo7 and kpna2, while microtubule bundling is inhibited by kpnb1. Active GTP-bound ran causes dissociation of ipo7 and kpnb1.

The protein resides in the cytoplasm. It localises to the nucleus. It is found in the cytoskeleton. The protein localises to the spindle. Microtubule-associated protein with the capacity to bundle and stabilize microtubules. May associate with chromosomes and promote the organization of meiotic or mitotic spindle microtubules around them. This is Nucleolar and spindle-associated protein 1-C (nusap1-c) from Xenopus laevis (African clawed frog).